Here is a 268-residue protein sequence, read N- to C-terminus: Eukaryotic translation initiation factor 3 subunit G-2 (268 aa).

Residues 187–265 enclose the RRM domain; sequence SAVRISNLSE…LILCVEWSKP (79 aa).

It belongs to the eIF-3 subunit G family. Component of the eukaryotic translation initiation factor 3 (eIF-3) complex. The eIF-3 complex interacts with pix.

Its subcellular location is the cytoplasm. RNA-binding component of the eukaryotic translation initiation factor 3 (eIF-3) complex, which is involved in protein synthesis of a specialized repertoire of mRNAs and, together with other initiation factors, stimulates binding of mRNA and methionyl-tRNAi to the 40S ribosome. The eIF-3 complex specifically targets and initiates translation of a subset of mRNAs involved in cell proliferation. This subunit can bind 18S rRNA. The protein is Eukaryotic translation initiation factor 3 subunit G-2 of Drosophila willistoni (Fruit fly).